Reading from the N-terminus, the 382-residue chain is Dual-specificity RNA methyltransferase RlmN (382 aa).

The active-site Proton acceptor is the Glu-94. Residues 100–336 form the Radical SAM core domain; the sequence is EANRGTLCVS…NTITRKTRGD (237 aa). A disulfide bridge connects residues Cys-107 and Cys-342. [4Fe-4S] cluster is bound by residues Cys-114, Cys-118, and Cys-121. Residues 168–169, Ser-200, 222–224, and Asn-299 each bind S-adenosyl-L-methionine; these read GE and SLH. Cys-342 acts as the S-methylcysteine intermediate in catalysis.

Belongs to the radical SAM superfamily. RlmN family. Requires [4Fe-4S] cluster as cofactor.

Its subcellular location is the cytoplasm. It carries out the reaction adenosine(2503) in 23S rRNA + 2 reduced [2Fe-2S]-[ferredoxin] + 2 S-adenosyl-L-methionine = 2-methyladenosine(2503) in 23S rRNA + 5'-deoxyadenosine + L-methionine + 2 oxidized [2Fe-2S]-[ferredoxin] + S-adenosyl-L-homocysteine. It catalyses the reaction adenosine(37) in tRNA + 2 reduced [2Fe-2S]-[ferredoxin] + 2 S-adenosyl-L-methionine = 2-methyladenosine(37) in tRNA + 5'-deoxyadenosine + L-methionine + 2 oxidized [2Fe-2S]-[ferredoxin] + S-adenosyl-L-homocysteine. Functionally, specifically methylates position 2 of adenine 2503 in 23S rRNA and position 2 of adenine 37 in tRNAs. m2A2503 modification seems to play a crucial role in the proofreading step occurring at the peptidyl transferase center and thus would serve to optimize ribosomal fidelity. This Legionella pneumophila subsp. pneumophila (strain Philadelphia 1 / ATCC 33152 / DSM 7513) protein is Dual-specificity RNA methyltransferase RlmN.